Consider the following 457-residue polypeptide: D-hydantoinase (457 aa).

Positions 57 and 59 each coordinate Zn(2+). Serine 69 carries the phosphoserine modification. Position 148 (lysine 148) interacts with Zn(2+). Position 148 is an N6-carboxylysine (lysine 148). Position 153 (tyrosine 153) interacts with substrate. Residues histidine 181 and histidine 237 each coordinate Zn(2+). Threonine 286 provides a ligand contact to substrate. Residue aspartate 313 participates in Zn(2+) binding. Asparagine 335 provides a ligand contact to substrate.

This sequence belongs to the metallo-dependent hydrolases superfamily. Hydantoinase/dihydropyrimidinase family. In terms of assembly, homodimer and homotetramer. The cofactor is Zn(2+). Carboxylation allows a single lysine to coordinate two zinc ions.

Functionally, catalyzes the stereospecific hydrolysis of the cyclic amide bond of D-hydantoin derivatives. The protein is D-hydantoinase (hyuA) of Ralstonia pickettii (Burkholderia pickettii).